Consider the following 329-residue polypeptide: MQHLNELIEKAKLAIESIQDRSLTALDEIRVEYFGKKGHFTQLMQELRNVSAEERPAMGAKINEAKQAALEFLNAKKTEWEQAELNAKLEKERVDVSLPGRKVETGGLHPVTMTINRVTKFFSELGFSVENGPEIESDYYNFDALNIPKHHPARADHDTFWFNPELLLRTQTSGVQIRTMEKMQPPIRIMAPGRVYRNDYDQTHTPMFHQIELLYVDKKANFTELKGLLHDFLRAFFEEDLQVRFRPSYFPFTEPSAEVDVMGKNGKWLEVLGCGMVHPNVLRNVGIDPNEYSGFAVGMGVERLTMLRYNVTDLRSFFENDLRFLKQFK.

Residue E254 participates in Mg(2+) binding.

Belongs to the class-II aminoacyl-tRNA synthetase family. Phe-tRNA synthetase alpha subunit type 1 subfamily. In terms of assembly, tetramer of two alpha and two beta subunits. Mg(2+) is required as a cofactor.

Its subcellular location is the cytoplasm. It catalyses the reaction tRNA(Phe) + L-phenylalanine + ATP = L-phenylalanyl-tRNA(Phe) + AMP + diphosphate + H(+). This is Phenylalanine--tRNA ligase alpha subunit from Haemophilus influenzae (strain PittEE).